The following is a 116-amino-acid chain: U30-theraphotoxin-Cg1a (116 aa).

An N-terminal signal peptide occupies residues 1-17 (MKLCVLTIASLLVTVTS). Positions 18–53 (LETQKEIAEGSELTREETPSLVEHKEDEAAAASEKR) are excised as a propeptide. The tract at residues 24 to 46 (IAEGSELTREETPSLVEHKEDEA) is disordered. Cystine bridges form between Cys-55–Cys-69, Cys-62–Cys-75, Cys-66–Cys-112, and Cys-68–Cys-88.

It belongs to the neurotoxin 03 (Tx2) family. 02 subfamily. HNTX-XV sub-subfamily. In terms of tissue distribution, expressed by the venom gland.

Its subcellular location is the secreted. In terms of biological role, probable ion channel inhibitor. This Chilobrachys guangxiensis (Chinese earth tiger tarantula) protein is U30-theraphotoxin-Cg1a.